The chain runs to 161 residues: Small ribosomal subunit protein uS9 (161 aa).

The protein belongs to the universal ribosomal protein uS9 family.

The sequence is that of Small ribosomal subunit protein uS9 from Bartonella bacilliformis (strain ATCC 35685 / KC583 / Herrer 020/F12,63).